Here is a 634-residue protein sequence, read N- to C-terminus: Carbon monoxide dehydrogenase 2 (634 aa).

[4Fe-4S] cluster contacts are provided by Cys-44, Cys-53, Cys-56, Cys-61, and Cys-73. [Ni-4Fe-5S] cluster-binding residues include His-264, Cys-343, Cys-453, Cys-484, and Cys-525.

It belongs to the Ni-containing carbon monoxide dehydrogenase family. As to quaternary structure, homodimer. The cofactor is [4Fe-4S] cluster. Requires [Ni-4Fe-5S] cluster as cofactor.

The enzyme catalyses CO + 2 oxidized [2Fe-2S]-[ferredoxin] + H2O = 2 reduced [2Fe-2S]-[ferredoxin] + CO2 + 2 H(+). CODH oxidizes carbon monoxide coupled, via CooF, to the reduction of a hydrogen cation by a hydrogenase (possibly CooH). This chain is Carbon monoxide dehydrogenase 2 (cooS2), found in Methanosarcina mazei (strain ATCC BAA-159 / DSM 3647 / Goe1 / Go1 / JCM 11833 / OCM 88) (Methanosarcina frisia).